The chain runs to 301 residues: 4-diphosphocytidyl-2-C-methyl-D-erythritol kinase (301 aa).

K10 is an active-site residue. 96 to 106 (PMGGGVGGGSS) contributes to the ATP binding site. D138 is an active-site residue.

The protein belongs to the GHMP kinase family. IspE subfamily.

It catalyses the reaction 4-CDP-2-C-methyl-D-erythritol + ATP = 4-CDP-2-C-methyl-D-erythritol 2-phosphate + ADP + H(+). The protein operates within isoprenoid biosynthesis; isopentenyl diphosphate biosynthesis via DXP pathway; isopentenyl diphosphate from 1-deoxy-D-xylulose 5-phosphate: step 3/6. Functionally, catalyzes the phosphorylation of the position 2 hydroxy group of 4-diphosphocytidyl-2C-methyl-D-erythritol. This chain is 4-diphosphocytidyl-2-C-methyl-D-erythritol kinase, found in Alcanivorax borkumensis (strain ATCC 700651 / DSM 11573 / NCIMB 13689 / SK2).